We begin with the raw amino-acid sequence, 121 residues long: Amelogenin (121 aa).

Disordered regions lie at residues 1-20 and 32-121; these read LHHQ…HALQ and QPMQ…WPAT. The span at 48-58 shows a compositional bias: polar residues; that stretch reads SVTPTQHHQSN. Residues 59 to 71 show a composition bias toward low complexity; sequence LPQPAQQPFQPQV. Residues 85–111 are compositionally biased toward pro residues; the sequence is PAHPMPPMPQPPLPPMFPMQPLPPLLP.

Belongs to the amelogenin family.

It localises to the secreted. It is found in the extracellular space. Its subcellular location is the extracellular matrix. Functionally, plays a role in the biomineralization of teeth. Seems to regulate the formation of crystallites during the secretory stage of tooth enamel development. Thought to play a major role in the structural organization and mineralization of developing enamel. The protein is Amelogenin (AMEL) of Ornithorhynchus anatinus (Duckbill platypus).